The sequence spans 384 residues: Deoxyguanosinetriphosphate triphosphohydrolase-like protein (384 aa).

One can recognise an HD domain in the interval 62–198 (RLTHSLEVST…AALADDISYI (137 aa)).

It belongs to the dGTPase family. Type 2 subfamily.

In Rickettsia rickettsii (strain Iowa), this protein is Deoxyguanosinetriphosphate triphosphohydrolase-like protein.